The primary structure comprises 479 residues: Glycogen synthase (479 aa).

Residue K15 participates in ADP-alpha-D-glucose binding.

It belongs to the glycosyltransferase 1 family. Bacterial/plant glycogen synthase subfamily.

The enzyme catalyses [(1-&gt;4)-alpha-D-glucosyl](n) + ADP-alpha-D-glucose = [(1-&gt;4)-alpha-D-glucosyl](n+1) + ADP + H(+). Its pathway is glycan biosynthesis; glycogen biosynthesis. Functionally, synthesizes alpha-1,4-glucan chains using ADP-glucose. The protein is Glycogen synthase of Clostridium novyi (strain NT).